The sequence spans 600 residues: UvrABC system protein C (600 aa).

The region spanning 15–92 is the GIY-YIG domain; the sequence is EKPGCYLMKD…IKKYQPYYNV (78 aa). In terms of domain architecture, UVR spans 197 to 232; it reads GAVKQDLTQKMEQASEQLEFERAAEIRDQLKYIEET.

This sequence belongs to the UvrC family. As to quaternary structure, interacts with UvrB in an incision complex.

The protein localises to the cytoplasm. In terms of biological role, the UvrABC repair system catalyzes the recognition and processing of DNA lesions. UvrC both incises the 5' and 3' sides of the lesion. The N-terminal half is responsible for the 3' incision and the C-terminal half is responsible for the 5' incision. This Lactobacillus helveticus (strain DPC 4571) protein is UvrABC system protein C.